Here is a 609-residue protein sequence, read N- to C-terminus: Zinc metalloproteinase/disintegrin-like HR1a (609 aa).

The N-terminal stretch at 1–20 is a signal peptide; that stretch reads MIQVLLVTICLAVFPYQGSS. Positions 21 to 190 are excised as a propeptide; sequence IILGSGNVND…KKASKLVVTA (170 aa). The Peptidase M12B domain maps to 200–396; it reads RFIELVIVAD…DEPQCILNEP (197 aa). Ca(2+) is bound by residues E203 and D287. The N-linked (GlcNAc...) asparagine glycan is linked to N298. 3 disulfide bridges follow: C311–C391, C351–C375, and C353–C358. H336 lines the Zn(2+) pocket. E337 is an active-site residue. Residues H340 and H346 each coordinate Zn(2+). Residue N350 is glycosylated (N-linked (GlcNAc...) asparagine). An N-linked (GlcNAc...) asparagine glycan is attached at N374. Positions 391 and 394 each coordinate Ca(2+). Residues 397–400 constitute a propeptide that is removed on maturation; the sequence is LRTD. Positions 404–490 constitute a Disintegrin domain; the sequence is PPVCGNELLE…DCPTDRFHRN (87 aa). 6 residues coordinate Ca(2+): V406, N409, L411, E413, E416, and D419. 22 disulfides stabilise this stretch: C407/C426, C407/C436, C418/C431, C418/C436, C420/C426, C430/C453, C444/C450, C449/C475, C462/C482, C469/C494, C469/C501, C494/C506, C501/C506, C513/C528, C513/C563, C528/C571, C541/C551, C551/C558, C558/C597, C563/C571, C591/C602, and C597/C602. The D/ECD-tripeptide motif lies at 468-470; that stretch reads ECD. Ca(2+) contacts are provided by D470, E473, and D485. Residue N520 is glycosylated (N-linked (GlcNAc...) asparagine).

This sequence belongs to the venom metalloproteinase (M12B) family. P-III subfamily. P-IIIb sub-subfamily. As to quaternary structure, monomer. Zn(2+) serves as cofactor. As to expression, expressed by the venom gland.

The protein resides in the secreted. In terms of biological role, zinc protease that induces hemorrhage and has proteolytic activity. Has preference for Ala, His, Pro, Met, and Tyr at the P1 position, in descending order (in vitro). Predominantly prefers Val and Asp at the P3 and P2 positions, respectively. Inhibits platelet aggregation induced by ADP, thrombin, platelet-activating factor and collagen. Acts by inhibiting fibrinogen interaction with platelet receptors alpha-IIb/beta-3 (ITGA2B/ITGB3). The protein is Zinc metalloproteinase/disintegrin-like HR1a of Protobothrops flavoviridis (Habu).